We begin with the raw amino-acid sequence, 339 residues long: RNA 3'-terminal phosphate cyclase (339 aa).

Residues glutamine 101 and 283–286 (HMSD) contribute to the ATP site. Histidine 307 serves as the catalytic Tele-AMP-histidine intermediate.

This sequence belongs to the RNA 3'-terminal cyclase family. Type 1 subfamily.

The protein localises to the cytoplasm. The catalysed reaction is a 3'-end 3'-phospho-ribonucleotide-RNA + ATP = a 3'-end 2',3'-cyclophospho-ribonucleotide-RNA + AMP + diphosphate. Functionally, catalyzes the conversion of 3'-phosphate to a 2',3'-cyclic phosphodiester at the end of RNA. The mechanism of action of the enzyme occurs in 3 steps: (A) adenylation of the enzyme by ATP; (B) transfer of adenylate to an RNA-N3'P to produce RNA-N3'PP5'A; (C) and attack of the adjacent 2'-hydroxyl on the 3'-phosphorus in the diester linkage to produce the cyclic end product. The biological role of this enzyme is unknown but it is likely to function in some aspects of cellular RNA processing. The polypeptide is RNA 3'-terminal phosphate cyclase (Sulfurisphaera tokodaii (strain DSM 16993 / JCM 10545 / NBRC 100140 / 7) (Sulfolobus tokodaii)).